A 360-amino-acid polypeptide reads, in one-letter code: NAD(P)H-quinone oxidoreductase subunit 1, chloroplastic (360 aa).

Helical transmembrane passes span 27 to 47 (IWIFVPIFSLVLGIITGVLVI), 98 to 118 (FSIGPSIAVISILLSYSIIPF), 129 to 149 (IGIFLWIAISSIAPIGLLMSG), 165 to 185 (AAQSISYEIPLTLCVLSISLL), 203 to 223 (FWGWNLWRQPIGFIIFLISSL), 253 to 273 (FGLFYVASYLNLLISSLFVTV), 297 to 317 (IFGTTIGIFITLAKTYLFLFI), and 340 to 360 (FLLPISLGNLLLTTSFQLFSL).

This sequence belongs to the complex I subunit 1 family. As to quaternary structure, NDH is composed of at least 16 different subunits, 5 of which are encoded in the nucleus.

Its subcellular location is the plastid. It localises to the chloroplast thylakoid membrane. The catalysed reaction is a plastoquinone + NADH + (n+1) H(+)(in) = a plastoquinol + NAD(+) + n H(+)(out). It carries out the reaction a plastoquinone + NADPH + (n+1) H(+)(in) = a plastoquinol + NADP(+) + n H(+)(out). In terms of biological role, NDH shuttles electrons from NAD(P)H:plastoquinone, via FMN and iron-sulfur (Fe-S) centers, to quinones in the photosynthetic chain and possibly in a chloroplast respiratory chain. The immediate electron acceptor for the enzyme in this species is believed to be plastoquinone. Couples the redox reaction to proton translocation, and thus conserves the redox energy in a proton gradient. This chain is NAD(P)H-quinone oxidoreductase subunit 1, chloroplastic, found in Lobularia maritima (Sweet alyssum).